The chain runs to 126 residues: Holo-[acyl-carrier-protein] synthase (126 aa).

Residues D9 and E58 each contribute to the Mg(2+) site.

Belongs to the P-Pant transferase superfamily. AcpS family. It depends on Mg(2+) as a cofactor.

The protein resides in the cytoplasm. It carries out the reaction apo-[ACP] + CoA = holo-[ACP] + adenosine 3',5'-bisphosphate + H(+). In terms of biological role, transfers the 4'-phosphopantetheine moiety from coenzyme A to a Ser of acyl-carrier-protein. This is Holo-[acyl-carrier-protein] synthase from Escherichia coli O17:K52:H18 (strain UMN026 / ExPEC).